Consider the following 201-residue polypeptide: Small ribosomal subunit protein uS4c (201 aa).

Residues 19 to 38 (PGLTSKSPKAGSDLRNQLRS) are disordered. Positions 89-149 (MRLDNILFRL…DEQKSRALIQ (61 aa)) constitute an S4 RNA-binding domain.

Belongs to the universal ribosomal protein uS4 family. Part of the 30S ribosomal subunit. Contacts protein S5. The interaction surface between S4 and S5 is involved in control of translational fidelity.

It localises to the plastid. It is found in the chloroplast. In terms of biological role, one of the primary rRNA binding proteins, it binds directly to 16S rRNA where it nucleates assembly of the body of the 30S subunit. Its function is as follows. With S5 and S12 plays an important role in translational accuracy. The polypeptide is Small ribosomal subunit protein uS4c (rps4) (Platanus occidentalis (Sycamore)).